A 449-amino-acid chain; its full sequence is UDP-glycosyltransferase 74F2 (449 aa).

UDP-alpha-D-glucose is bound by residues Ser-273, 325-327 (SPQ), 342-350 (HCGWNSTME), and 364-367 (WTDQ).

Belongs to the UDP-glycosyltransferase family. As to expression, expressed in seedlings.

Glycosyltransferase that glucosylates benzoic acid and derivatives. Substrate preference is benzoic acid &gt; salicylic acid (SA) &gt; 3-hydroxybenzoic acid &gt; 4-hydroxybenzoic acid. Catalyzes the formation of both SA 2-O-beta-D-glucoside (SAG) and SA glucose ester (SGE). Has high affinity for the tryptophan precursor anthranilate. Catalyzes the formation of anthranilate glucose ester. Is the major source of this activity in the plant. The protein is UDP-glycosyltransferase 74F2 (UGT74F2) of Arabidopsis thaliana (Mouse-ear cress).